We begin with the raw amino-acid sequence, 892 residues long: UPF0182 protein Gura_0902 (892 aa).

A run of 7 helical transmembrane segments spans residues 6–26 (FIII…LINF), 50–70 (VGAG…NLHF), 103–123 (LGIL…AMQW), 158–178 (MLKI…GAVY), 201–221 (LAVL…LNGC), 248–268 (ILTV…WQGA), and 271–291 (LALL…KAYP).

This sequence belongs to the UPF0182 family.

The protein resides in the cell membrane. This chain is UPF0182 protein Gura_0902, found in Geotalea uraniireducens (strain Rf4) (Geobacter uraniireducens).